A 529-amino-acid chain; its full sequence is UDP-glucuronosyltransferase 2B11 (529 aa).

An N-terminal signal peptide occupies residues 1-21 (MTLKWTSVLLLIHLSCYFSSG). Lys135 carries the post-translational modification N6-succinyllysine. Residue Asn315 is glycosylated (N-linked (GlcNAc...) asparagine). A helical transmembrane segment spans residues 493 to 513 (VIGFLLACVATVIFIITKFCL).

Belongs to the UDP-glycosyltransferase family. As to expression, widely expressed.

The protein resides in the microsome membrane. It localises to the endoplasmic reticulum membrane. The enzyme catalyses glucuronate acceptor + UDP-alpha-D-glucuronate = acceptor beta-D-glucuronoside + UDP + H(+). Functionally, UDPGT is of major importance in the conjugation and subsequent elimination of potentially toxic xenobiotics and endogenous compounds. The chain is UDP-glucuronosyltransferase 2B11 (UGT2B11) from Homo sapiens (Human).